The primary structure comprises 264 residues: Transmembrane protein 41A (264 aa).

A signal peptide spans 1–17 (MHSLLGLLLVFAGSTFA). Transmembrane regions (helical) follow at residues 67–87 (VYVF…AIPG), 90–110 (FLNV…LCCV), 153–173 (LFFF…FLNL), 175–195 (APIL…GLIP), and 219–239 (WETA…GTLI). The interval 96–207 (GALFGPWLGL…FICVQTGSIL (112 aa)) is VTT domain.

The protein belongs to the TMEM41 family.

The protein resides in the membrane. The protein is Transmembrane protein 41A (TMEM41A) of Bos taurus (Bovine).